We begin with the raw amino-acid sequence, 425 residues long: Enolase (425 aa).

Gln-162 provides a ligand contact to (2R)-2-phosphoglycerate. The active-site Proton donor is the Glu-204. 3 residues coordinate Mg(2+): Asp-241, Glu-282, and Asp-309. Residues Lys-334, Arg-363, Ser-364, and Lys-385 each contribute to the (2R)-2-phosphoglycerate site. Lys-334 (proton acceptor) is an active-site residue.

This sequence belongs to the enolase family. Mg(2+) serves as cofactor.

It is found in the cytoplasm. The protein resides in the secreted. It localises to the cell surface. It catalyses the reaction (2R)-2-phosphoglycerate = phosphoenolpyruvate + H2O. It participates in carbohydrate degradation; glycolysis; pyruvate from D-glyceraldehyde 3-phosphate: step 4/5. Its function is as follows. Catalyzes the reversible conversion of 2-phosphoglycerate (2-PG) into phosphoenolpyruvate (PEP). It is essential for the degradation of carbohydrates via glycolysis. This chain is Enolase, found in Corynebacterium diphtheriae (strain ATCC 700971 / NCTC 13129 / Biotype gravis).